The chain runs to 396 residues: MATETFLYTSESVNEGHPDKLCDQISDAVLDACLEQDPDSKVACETCTKTNMVMVFGEITTKANVDYEKIVRNTCRNIGFVSDDVGLDADNCKVLVNIEQQSPDIAQGVHGHLTKRPEEIGAGDQGHMFGYATDETPELMPLTHVLATKLGAKLTEVRKNGTCPWLRPDGKTQVTIEYFNDKGAMVPIRVHTVLISTQHDETVTNDEIAADLKQHVIKPVIPEKYLDEKTIFHLNPSGRFVIGGPHGDAGLTGRKIIIDTYGGWGAHGGGAFSGKDPTKVDRSGAYIVRQAAKSIVANGLARRCIVQVSYAIGVPEPLSVFVDSYGTGKIPDKEILNIVKETFDFRPGMISINLDLKRGGNNRFLKTAAYGHFGRDDADFTWEVVKPLKGGKLATA.

E11 lines the Mg(2+) pocket. H17 provides a ligand contact to ATP. Residue E45 participates in K(+) binding. L-methionine contacts are provided by E58 and Q101. ATP is bound by residues 169–171 (DGK), 237–240 (SGRF), D248, 254–255 (RK), A271, K275, and K279. Residue D248 participates in L-methionine binding. Residue K279 coordinates L-methionine.

It belongs to the AdoMet synthase family. As to quaternary structure, homotetramer. Mn(2+) is required as a cofactor. Mg(2+) serves as cofactor. It depends on Co(2+) as a cofactor. The cofactor is K(+).

The protein resides in the cytoplasm. The enzyme catalyses L-methionine + ATP + H2O = S-adenosyl-L-methionine + phosphate + diphosphate. It functions in the pathway amino-acid biosynthesis; S-adenosyl-L-methionine biosynthesis; S-adenosyl-L-methionine from L-methionine: step 1/1. Catalyzes the formation of S-adenosylmethionine from methionine and ATP. The reaction comprises two steps that are both catalyzed by the same enzyme: formation of S-adenosylmethionine (AdoMet) and triphosphate, and subsequent hydrolysis of the triphosphate. The protein is S-adenosylmethionine synthase (SAMS) of Medicago sativa subsp. falcata (Sickle medic).